The chain runs to 200 residues: Glycerol-3-phosphate acyltransferase (200 aa).

5 helical membrane-spanning segments follow: residues 2-22 (FNIP…AVIV), 51-71 (KAAA…VLLA), 84-104 (AIAA…FFGF), 114-134 (LGVL…IWLV), and 159-179 (FFMP…LVLF).

Belongs to the PlsY family. In terms of assembly, probably interacts with PlsX.

The protein resides in the cell inner membrane. It catalyses the reaction an acyl phosphate + sn-glycerol 3-phosphate = a 1-acyl-sn-glycero-3-phosphate + phosphate. It functions in the pathway lipid metabolism; phospholipid metabolism. Functionally, catalyzes the transfer of an acyl group from acyl-phosphate (acyl-PO(4)) to glycerol-3-phosphate (G3P) to form lysophosphatidic acid (LPA). This enzyme utilizes acyl-phosphate as fatty acyl donor, but not acyl-CoA or acyl-ACP. This is Glycerol-3-phosphate acyltransferase from Neisseria meningitidis serogroup B (strain ATCC BAA-335 / MC58).